Reading from the N-terminus, the 82-residue chain is Small ribosomal subunit protein bS16 (82 aa).

This sequence belongs to the bacterial ribosomal protein bS16 family.

The chain is Small ribosomal subunit protein bS16 from Elusimicrobium minutum (strain Pei191).